The chain runs to 632 residues: Extracellular metalloproteinase 2 (632 aa).

An N-terminal signal peptide occupies residues 1–19 (MHGLLLAGLAAALPLGVAG). The propeptide occupies 20-244 (LPARQQSGLS…VHNVVDYVAS (225 aa)). Asparagine 270 is a glycosylation site (N-linked (GlcNAc...) asparagine). Histidine 429 lines the Zn(2+) pocket. Glutamate 430 is an active-site residue. Histidine 433 contacts Zn(2+).

This sequence belongs to the peptidase M36 family. Zn(2+) serves as cofactor.

The protein localises to the secreted. In terms of biological role, secreted metalloproteinase probably acting as a virulence factor. The protein is Extracellular metalloproteinase 2 (MEP2) of Trichophyton rubrum (Athlete's foot fungus).